A 411-amino-acid polypeptide reads, in one-letter code: ATP-dependent Clp protease ATP-binding subunit ClpX (411 aa).

Positions 1–51 (MAKKKDEEYCSFCGMPRTQVNLMLEGVHAHICDECALRAGEVVREALQKFK) constitute a ClpX-type ZB domain. Cys-10, Cys-13, Cys-32, and Cys-35 together coordinate Zn(2+). An ATP-binding site is contributed by 119–126 (PTGTGKTL).

This sequence belongs to the ClpX chaperone family. As to quaternary structure, component of the ClpX-ClpP complex. Forms a hexameric ring that, in the presence of ATP, binds to fourteen ClpP subunits assembled into a disk-like structure with a central cavity, resembling the structure of eukaryotic proteasomes.

In terms of biological role, ATP-dependent specificity component of the Clp protease. It directs the protease to specific substrates. Can perform chaperone functions in the absence of ClpP. In Porphyromonas gingivalis (strain ATCC 33277 / DSM 20709 / CIP 103683 / JCM 12257 / NCTC 11834 / 2561), this protein is ATP-dependent Clp protease ATP-binding subunit ClpX.